The following is a 161-amino-acid chain: MSSSEVDKVFTEEQEALVVKSWAVMKKNSAELGLKFFLKIFEIAPSAKNLFSYLKDSPIPLEQNPKLKPHAMTVFVMTCESAVQLRKAGKVTVRESNLKRLGAIHFKNGVVNEHFETRFALLETIKEAVPEMWSPEMKNAWGEAYDQLVAAIKSEMKPSST.

One can recognise a Globin domain in the interval 9-157 (VFTEEQEALV…LVAAIKSEMK (149 aa)). Positions 42–46 (EIAPS) match the Homodimerization motif. Positions 52, 66, 70, 100, and 105 each coordinate heme b. The Homodimerization motif lies at 112–123 (NEHFETRFALLE).

It belongs to the plant globin family. In terms of assembly, homodimer. It depends on heme b as a cofactor. In terms of tissue distribution, root specific.

Its subcellular location is the cytoplasm. It is found in the nucleus. It catalyses the reaction Fe(III)-heme b-[protein] + nitric oxide + H2O = Fe(II)-heme b-[protein] + nitrite + 2 H(+). Its function is as follows. Phytoglobin that reduces nitrite to nitric oxide (NO) under anoxic conditions (e.g. during flooding or in waterlogged soil) and upon root nodulation. Required for general plant development and during nodulation, especially for the onset of symbiosis. Monitors nitric oxide (NO) levels during early phase of the nitrogen-fixing symbiosis and buffers oxygen in functioning nodules. May not function as an oxygen storage or transport protein. Has an unusually high affinity for O(2) through a hexacoordinate heme iron because of a very low dissociation constant. This is Anaerobic nitrite reductase GLB1 (GLB1) from Trema tomentosum (Peach-leaf poison-bush).